The sequence spans 114 residues: UPF0102 protein Shew_0226 (114 aa).

This sequence belongs to the UPF0102 family.

This Shewanella loihica (strain ATCC BAA-1088 / PV-4) protein is UPF0102 protein Shew_0226.